Reading from the N-terminus, the 561-residue chain is 4-coumarate--CoA ligase 3 (561 aa).

Residues Ser213, Ser214, Gly215, Thr216, Thr217, and Lys221 each coordinate ATP. (E)-4-coumaroyl-AMP-binding residues include Tyr263 and Ser267. Lys284 serves as a coordination point for CoA. Positions 286 to 355 (EIGALLDLIQ…RRLPQAILGQ (70 aa)) are SBD1. The (E)-4-coumaroyl-AMP site is built by Ala333, Gln355, Gly356, Thr360, and Met368. Residues Gln355, Gly356, and Thr360 each contribute to the ATP site. Residues 356–423 (GYGMTEAGPV…IRGQQIMKEY (68 aa)) form an SBD2 region. ATP is bound by residues Asp444 and Arg459. 2 residues coordinate (E)-4-coumaroyl-AMP: Lys461 and Lys465. The CoA site is built by Lys467 and Gly468. Lys550 lines the ATP pocket.

It belongs to the ATP-dependent AMP-binding enzyme family. Requires Mg(2+) as cofactor. In terms of tissue distribution, preferentially expressed in leaves, flowers and siliques.

The catalysed reaction is (E)-4-coumarate + ATP + CoA = (E)-4-coumaroyl-CoA + AMP + diphosphate. It carries out the reaction (E)-caffeate + ATP + CoA = (E)-caffeoyl-CoA + AMP + diphosphate. It catalyses the reaction (E)-ferulate + ATP + CoA = (E)-feruloyl-CoA + AMP + diphosphate. The enzyme catalyses (E)-4-coumarate + ATP + H(+) = (E)-4-coumaroyl-AMP + diphosphate. The catalysed reaction is (E)-4-coumaroyl-AMP + CoA = (E)-4-coumaroyl-CoA + AMP + H(+). It carries out the reaction (E)-caffeate + ATP + H(+) = (E)-caffeoyl-AMP + diphosphate. It catalyses the reaction (E)-caffeoyl-AMP + CoA = (E)-caffeoyl-CoA + AMP + H(+). The enzyme catalyses (E)-ferulate + ATP + H(+) = (E)-feruloyl-AMP + diphosphate. The catalysed reaction is (E)-feruloyl-AMP + CoA = (E)-feruloyl-CoA + AMP + H(+). Its pathway is phytoalexin biosynthesis; 3,4',5-trihydroxystilbene biosynthesis; 3,4',5-trihydroxystilbene from trans-4-coumarate: step 1/2. Produces CoA thioesters of a variety of hydroxy- and methoxy-substituted cinnamic acids, which are used to synthesize several phenylpropanoid-derived compounds, including anthocyanins, flavonoids, isoflavonoids, coumarins, lignin, suberin and wall-bound phenolics. Follows a two-step reaction mechanism, wherein the carboxylate substrate first undergoes adenylation by ATP, followed by a thioesterification in the presence of CoA to yield the final CoA thioesters. This is 4-coumarate--CoA ligase 3 from Arabidopsis thaliana (Mouse-ear cress).